Here is a 31-residue protein sequence, read N- to C-terminus: Bacteriocin lactocin-705 (31 aa).

In terms of biological role, antibacterial activity against several lactic acid bacteria, Listeria, Streptococci, etc. The chain is Bacteriocin lactocin-705 from Lacticaseibacillus paracasei (Lactobacillus paracasei).